Reading from the N-terminus, the 428-residue chain is 3-phosphoshikimate 1-carboxyvinyltransferase (428 aa).

The 3-phosphoshikimate site is built by K19, S20, and R24. Position 19 (K19) interacts with phosphoenolpyruvate. 2 residues coordinate phosphoenolpyruvate: G91 and R119. Positions 164, 166, 312, and 339 each coordinate 3-phosphoshikimate. A phosphoenolpyruvate-binding site is contributed by Q166. The active-site Proton acceptor is the D312. Phosphoenolpyruvate is bound by residues R343 and R386.

Belongs to the EPSP synthase family. Monomer.

It is found in the cytoplasm. It carries out the reaction 3-phosphoshikimate + phosphoenolpyruvate = 5-O-(1-carboxyvinyl)-3-phosphoshikimate + phosphate. Its pathway is metabolic intermediate biosynthesis; chorismate biosynthesis; chorismate from D-erythrose 4-phosphate and phosphoenolpyruvate: step 6/7. In terms of biological role, catalyzes the transfer of the enolpyruvyl moiety of phosphoenolpyruvate (PEP) to the 5-hydroxyl of shikimate-3-phosphate (S3P) to produce enolpyruvyl shikimate-3-phosphate and inorganic phosphate. This Bacillus pumilus (strain SAFR-032) protein is 3-phosphoshikimate 1-carboxyvinyltransferase.